The sequence spans 523 residues: Putative glycerol-3-phosphate transporter 1 (523 aa).

12 helical membrane-spanning segments follow: residues 29-49 (LSYS…YASY), 102-122 (VLLG…MYFA), 133-153 (IFLT…GVGY), 163-183 (FLIM…SVVA), 196-216 (LIMG…SLIA), 228-248 (FVVP…FLPV), 306-326 (FALC…WLPF), 344-364 (GNLS…AGYI), 368-388 (IGAR…ALFF), 402-422 (SLMF…TTAV), 444-464 (AIID…TGYI), and 468-488 (GSWT…GLLL).

Belongs to the major facilitator superfamily. Organophosphate:Pi antiporter (OPA) (TC 2.A.1.4) family.

Its subcellular location is the membrane. This Arabidopsis thaliana (Mouse-ear cress) protein is Putative glycerol-3-phosphate transporter 1.